A 691-amino-acid chain; its full sequence is Serotransferrin-2 (691 aa).

A signal peptide spans 1-18 (MKLLLLSALLGCLATAYA). Transferrin-like domains are found at residues 25-329 (VKWC…SLKK) and 340-670 (IKWC…SLRK). A disulfide bridge links C28 with C50. Fe(3+) contacts are provided by D74 and Y104. Disulfide bonds link C127/C207, C172/C186, and C235/C249. Hydrogencarbonate contacts are provided by T129, S134, G136, and W137. An N-linked (GlcNAc...) asparagine glycan is attached at N169. Y201 contacts Fe(3+). A Fe(3+)-binding site is contributed by H257. Cystine bridges form between C343–C379 and C353–C370. Residues D394 and Y428 each contribute to the Fe(3+) site. Cystine bridges form between C404–C682, C419–C643, C451–C530, C475–C671, C485–C499, C496–C513, and C570–C584. Residues T453, R457, A459, and G460 each contribute to the hydrogencarbonate site. Y524 contacts Fe(3+). Residue H592 participates in Fe(3+) binding.

It belongs to the transferrin family. Monomer. Abundant in liver and serum with smaller amounts found in the stomach and kidney.

It localises to the secreted. Its function is as follows. Transferrins are iron binding transport proteins which can bind two Fe(3+) ions in association with the binding of an anion, usually bicarbonate. It is responsible for the transport of iron from sites of absorption and heme degradation to those of storage and utilization. Serum transferrin may also have a further role in stimulating cell proliferation. The protein is Serotransferrin-2 (tf2) of Salmo salar (Atlantic salmon).